Consider the following 91-residue polypeptide: Small ribosomal subunit protein uS19 (91 aa).

The segment at Met-1–Lys-32 is disordered. Residues Pro-9 to Val-19 show a composition bias toward basic and acidic residues.

It belongs to the universal ribosomal protein uS19 family.

Functionally, protein S19 forms a complex with S13 that binds strongly to the 16S ribosomal RNA. This chain is Small ribosomal subunit protein uS19, found in Acidithiobacillus ferrooxidans (strain ATCC 53993 / BNL-5-31) (Leptospirillum ferrooxidans (ATCC 53993)).